A 3411-amino-acid polypeptide reads, in one-letter code: Genome polyprotein (3411 aa).

At 1–104 (MSGRKAQGKT…LSSRKRRSHD (104 aa)) the chain is on the cytoplasmic side. Residues 38–72 (PGPSRGVQGFISFFSFNILTGKKITAHLKRLWKML) are hydrophobic; homodimerization of capsid protein C. A propeptide spans 102 to 121 (SHDVLTVQFLILGMLLMAGG) (ER anchor for the capsid protein C, removed in mature form by serine protease NS3). Residues 105–125 (VLTVQFLILGMLLMAGGVTLV) form a helical membrane-spanning segment. Residues 126-244 (RKNRWLLLNV…GERQLQKIER (119 aa)) are Extracellular-facing. Asparagine 134 and asparagine 150 each carry an N-linked (GlcNAc...) asparagine; by host glycan. The chain crosses the membrane as a helical span at residues 245–265 (WLVRNPFFAVTALAIAYLVGS). Residues 266 to 270 (NMTQR) lie on the Cytoplasmic side of the membrane. Residues 271–285 (VVIALLVLAVGPAYS) form a helical membrane-spanning segment. The Extracellular portion of the chain corresponds to 286–730 (AHCIGITDRD…TVFGSAFQGL (445 aa)). 8 cysteine pairs are disulfide-bonded: cysteine 288/cysteine 315, cysteine 345/cysteine 401, cysteine 345/cysteine 406, cysteine 359/cysteine 390, cysteine 377/cysteine 401, cysteine 377/cysteine 406, cysteine 467/cysteine 568, and cysteine 585/cysteine 615. Residues 383 to 396 (DRGWGNGCGLFGKG) form a fusion peptide region. Residues 731 to 751 (FGGLSWITKVIMGAVLIWVGI) traverse the membrane as a helical segment. Residues 752-757 (NTRNMT) are Extracellular-facing. The chain crosses the membrane as a helical span at residues 758 to 778 (MSMSMILVGVIMMFLSLGVGA). Topologically, residues 779 to 1132 (DQGCAINFGK…LVRSWVTAGE (354 aa)) are extracellular. 6 cysteine pairs are disulfide-bonded: cysteine 782–cysteine 793, cysteine 833–cysteine 921, cysteine 957–cysteine 1002, cysteine 1058–cysteine 1107, cysteine 1069–cysteine 1091, and cysteine 1090–cysteine 1094. N-linked (GlcNAc...) asparagine; by host glycosylation is found at asparagine 908 and asparagine 986. The chain crosses the membrane as a helical span at residues 1133 to 1153 (IHAVPFGLVSMMIAMEVVLRK). At 1154 to 1201 (RQGPKQMLVGGMVLLGAMLVGQVTLLDLLKLTMAVGLHFHEMNNGGDA) the chain is on the cytoplasmic side. The chain crosses the membrane as a helical span at residues 1202–1222 (MYMALIAAFSIRPGLLIGFGL). Residues 1223–1287 (RTLWSPRERL…ILPLMALLTP (65 aa)) are Lumenal-facing. The chain crosses the membrane as a helical span at residues 1288–1308 (VTMAEVRLATMLLCAVVIIGV). Residues 1309 to 1355 (LHQNSKDTSMQKTIPLVALTLTSYLGLTQPFLGLCAFLATRIFGRRS) lie on the Cytoplasmic side of the membrane. The helical transmembrane segment at 1356–1376 (IPVNEALAAAGLVGVLAGLAF) threads the bilayer. Over 1377-1378 (QE) the chain is Lumenal. The chain crosses the membrane as a helical span at residues 1379 to 1399 (MENFLGPIAVGGILMMLVSVA). The Cytoplasmic portion of the chain corresponds to 1400-1456 (GRVDGLELKKLGEVSWEEEAEISGSSARYDVALSEQGEFKLLSEEKVPWDQVVMTSL). An interacts with and activates NS3 protease region spans residues 1407-1446 (LKKLGEVSWEEEAEISGSSARYDVALSEQGEFKLLSEEKV). Positions 1457-1477 (ALVGAAIHPSALLLVLAGWLF) form an intramembrane region, helical. Residues 1478–2157 (HVKGARRSGD…RNALSMMPEA (680 aa)) lie on the Cytoplasmic side of the membrane. A Peptidase S7 domain is found at 1485-1665 (SGDVLWDIPT…EVKEEGKEEL (181 aa)). Active-site charge relay system; for serine protease NS3 activity residues include histidine 1537, aspartate 1561, and serine 1622. The Helicase ATP-binding domain occupies 1669 to 1825 (PTMLKKGMTT…HSNGEIEDVQ (157 aa)). The tract at residues 1673–1676 (KKGM) is important for RNA-binding. Position 1682–1689 (1682–1689 (YHPGAGKT)) interacts with ATP. The DEAH box motif lies at 1773 to 1776 (DEAH). Residues 1820–1997 (EIEDVQTDIP…VRGGMVAPLY (178 aa)) enclose the Helicase C-terminal domain. Lysine 1877 carries the post-translational modification N6-acetyllysine; by host. The helical transmembrane segment at 2158–2178 (MTIVMLFILAGLLTSGMVIFF) threads the bilayer. The Lumenal segment spans residues 2179–2186 (MSPKGISR). An intramembrane region (helical) is located at residues 2187–2207 (MSMAMGTMAGCGYLMFLGGAK). Residues 2208–2209 (PT) are Lumenal-facing. Residues 2210-2230 (HISYIMLIFFVLMVVVIPEPG) form a helical membrane-spanning segment. Residues 2231-2241 (QQRSIQDNQVA) lie on the Cytoplasmic side of the membrane. Residues 2242–2262 (YLIIGILTLVSVVAANELGML) form a helical membrane-spanning segment. Over 2263–2293 (ERTKEDLFGKKNLIPSSASPWSWPDLDLKPG) the chain is Lumenal. The segment at residues 2294 to 2314 (AAWTVYVGIVTILSPMLHHWI) is an intramembrane region (helical). The Lumenal segment spans residues 2315-2360 (KVEYGNLSLSGIAQSASVLSFMDKGIPFMKMNISVIILLVSGWNSI). A helical membrane pass occupies residues 2361–2380 (TVMPLLCGIGCAMLHWTLIL). Topologically, residues 2381–2421 (PGIKAQQSKLPQRRVFHGVAKNPVVDGNPTVDIEEAPEMPA) are cytoplasmic. A helical membrane pass occupies residues 2422-2442 (LYEKKLALYLLLALSLASVAM). The Lumenal segment spans residues 2443-2445 (CRT). The chain crosses the membrane as a helical span at residues 2446 to 2466 (PFSLAEGIVLASAALGPLIEG). Residues 2467 to 3411 (NTSLLWNGPM…DADLQPGELI (945 aa)) lie on the Cytoplasmic side of the membrane. Positions 2507–2771 (GRANGKTLGE…DVILPIGTRS (265 aa)) constitute an mRNA cap 0-1 NS5-type MT domain. Serine 2562 serves as a coordination point for S-adenosyl-L-methionine. At serine 2562 the chain carries Phosphoserine. Lysine 2567 acts as the For 2'-O-MTase activity in catalysis. Residues glycine 2592, tryptophan 2593, threonine 2610, leucine 2611, aspartate 2637, and isoleucine 2638 each coordinate S-adenosyl-L-methionine. Aspartate 2652 acts as the For 2'-O-MTase activity in catalysis. Isoleucine 2653 contacts S-adenosyl-L-methionine. Active-site for 2'-O-MTase activity residues include lysine 2688 and glutamate 2724. Residue tyrosine 2726 participates in S-adenosyl-L-methionine binding. The Nuclear localization signal signature appears at 2878 to 2911 (RKIMKVVNRWLFRHLAREKNPRLCTKEEFIAKVR). Positions 2945, 2949, 2954, and 2957 each coordinate Zn(2+). Positions 3035–3187 (GGFYADDTAG…RPIDDRFGMA (153 aa)) constitute a RdRp catalytic domain. Residues histidine 3222, cysteine 3238, and cysteine 3357 each coordinate Zn(2+).

The protein in the N-terminal section; belongs to the class I-like SAM-binding methyltransferase superfamily. mRNA cap 0-1 NS5-type methyltransferase family. In terms of assembly, homodimer. Interacts (via N-terminus) with host EXOC1 (via C-terminus); this interaction results in EXOC1 degradation through the proteasome degradation pathway. As to quaternary structure, forms heterodimers with envelope protein E in the endoplasmic reticulum and Golgi. Homodimer; in the endoplasmic reticulum and Golgi. Interacts with protein prM. Interacts with non-structural protein 1. In terms of assembly, homodimer; Homohexamer when secreted. Interacts with envelope protein E. As to quaternary structure, interacts (via N-terminus) with serine protease NS3. Forms a heterodimer with serine protease NS3. May form homooligomers. In terms of assembly, forms a heterodimer with NS2B. Interacts with non-structural protein 2A (via N-terminus). Interacts with NS4B. Interacts with unphosphorylated RNA-directed RNA polymerase NS5; this interaction stimulates RNA-directed RNA polymerase NS5 guanylyltransferase activity. NS3 interacts with host PDCD6IP; this interaction contributes to virion release. As to quaternary structure, interacts with serine protease NS3. Homodimer. Interacts with host STAT2; this interaction prevents the establishment of cellular antiviral state. Interacts with serine protease NS3. Interacts with host TRIM23; this interaction leads to NS5 ubiquitination. In terms of processing, specific enzymatic cleavages in vivo yield mature proteins. The nascent capsid protein C contains a C-terminal hydrophobic domain that act as a signal sequence for translocation of prM into the lumen of the ER. Mature capsid protein C is cleaved at a site upstream of this hydrophobic domain by NS3. prM is cleaved in post-Golgi vesicles by a host furin, releasing the mature small envelope protein M, and peptide pr. Non-structural protein 2A-alpha, a C-terminally truncated form of non-structural protein 2A, results from partial cleavage by NS3. Specific enzymatic cleavages in vivo yield mature proteins peptide 2K acts as a signal sequence and is removed from the N-terminus of NS4B by the host signal peptidase in the ER lumen. Signal cleavage at the 2K-4B site requires a prior NS3 protease-mediated cleavage at the 4A-2K site. Post-translationally, cleaved in post-Golgi vesicles by a host furin, releasing the mature small envelope protein M, and peptide pr. This cleavage is incomplete as up to 30% of viral particles still carry uncleaved prM. N-glycosylated. In terms of processing, N-glycosylated. The excreted form is glycosylated and this is required for efficient secretion of the protein from infected cells. Post-translationally, polyubiquitinated; ubiquitination is probably mediated by host TRIM23 and is prerequisite for NS5-STAT2 interaction. NS5 is not ISGylated or sumoylated. Acetylated by host KAT5. Acetylation modulates NS3 RNA-binding and unwinding activities and plays an important positive role for viral replication. In terms of processing, phosphorylated on serines residues. This phosphorylation may trigger NS5 nuclear localization.

It localises to the virion. Its subcellular location is the host nucleus. The protein resides in the host cytoplasm. The protein localises to the host perinuclear region. It is found in the secreted. It localises to the virion membrane. Its subcellular location is the host endoplasmic reticulum membrane. The enzyme catalyses Selective hydrolysis of -Xaa-Xaa-|-Yaa- bonds in which each of the Xaa can be either Arg or Lys and Yaa can be either Ser or Ala.. It carries out the reaction RNA(n) + a ribonucleoside 5'-triphosphate = RNA(n+1) + diphosphate. It catalyses the reaction a ribonucleoside 5'-triphosphate + H2O = a ribonucleoside 5'-diphosphate + phosphate + H(+). The catalysed reaction is ATP + H2O = ADP + phosphate + H(+). The enzyme catalyses a 5'-end (5'-triphosphoguanosine)-ribonucleoside in mRNA + S-adenosyl-L-methionine = a 5'-end (N(7)-methyl 5'-triphosphoguanosine)-ribonucleoside in mRNA + S-adenosyl-L-homocysteine. It carries out the reaction a 5'-end (N(7)-methyl 5'-triphosphoguanosine)-ribonucleoside in mRNA + S-adenosyl-L-methionine = a 5'-end (N(7)-methyl 5'-triphosphoguanosine)-(2'-O-methyl-ribonucleoside) in mRNA + S-adenosyl-L-homocysteine + H(+). Functionally, plays a role in virus budding by binding to the cell membrane and gathering the viral RNA into a nucleocapsid that forms the core of a mature virus particle. During virus entry, may induce genome penetration into the host cytoplasm after hemifusion induced by the surface proteins. Can migrate to the cell nucleus where it modulates host functions. In terms of biological role, inhibits RNA silencing by interfering with host Dicer. Prevents premature fusion activity of envelope proteins in trans-Golgi by binding to envelope protein E at pH6.0. After virion release in extracellular space, gets dissociated from E dimers. Its function is as follows. Acts as a chaperone for envelope protein E during intracellular virion assembly by masking and inactivating envelope protein E fusion peptide. prM is the only viral peptide matured by host furin in the trans-Golgi network probably to avoid catastrophic activation of the viral fusion activity in acidic Golgi compartment prior to virion release. prM-E cleavage is inefficient, and many virions are only partially matured. These uncleaved prM would play a role in immune evasion. Functionally, may play a role in virus budding. Exerts cytotoxic effects by activating a mitochondrial apoptotic pathway through M ectodomain. May display a viroporin activity. In terms of biological role, binds to host cell surface receptor and mediates fusion between viral and cellular membranes. Envelope protein is synthesized in the endoplasmic reticulum in the form of heterodimer with protein prM. They play a role in virion budding in the ER, and the newly formed immature particle is covered with 60 spikes composed of heterodimer between precursor prM and envelope protein E. The virion is transported to the Golgi apparatus where the low pH causes dissociation of PrM-E heterodimers and formation of E homodimers. prM-E cleavage is inefficient, and many virions are only partially matured. These uncleaved prM would play a role in immune evasion. Involved in immune evasion, pathogenesis and viral replication. Once cleaved off the polyprotein, is targeted to three destinations: the viral replication cycle, the plasma membrane and the extracellular compartment. Essential for viral replication. Required for formation of the replication complex and recruitment of other non-structural proteins to the ER-derived membrane structures. Excreted as a hexameric lipoparticle that plays a role against host immune response. Antagonizing the complement function. Binds to the host macrophages and dendritic cells. Inhibits signal transduction originating from Toll-like receptor 3 (TLR3). Its function is as follows. Component of the viral RNA replication complex that functions in virion assembly and antagonizes the host immune response. Functionally, required cofactor for the serine protease function of NS3. May have membrane-destabilizing activity and form viroporins. In terms of biological role, displays three enzymatic activities: serine protease, NTPase and RNA helicase. NS3 serine protease, in association with NS2B, performs its autocleavage and cleaves the polyprotein at dibasic sites in the cytoplasm: C-prM, NS2A-NS2B, NS2B-NS3, NS3-NS4A, NS4A-2K and NS4B-NS5. NS3 RNA helicase binds RNA and unwinds dsRNA in the 3' to 5' direction. Also plays a role in virus assembly. Regulates the ATPase activity of the NS3 helicase activity. NS4A allows NS3 helicase to conserve energy during unwinding. Its function is as follows. Functions as a signal peptide for NS4B and is required for the interferon antagonism activity of the latter. Functionally, induces the formation of ER-derived membrane vesicles where the viral replication takes place. Inhibits interferon (IFN)-induced host STAT1 phosphorylation and nuclear translocation, thereby preventing the establishment of cellular antiviral state by blocking the IFN-alpha/beta pathway. In terms of biological role, replicates the viral (+) and (-) RNA genome, and performs the capping of genomes in the cytoplasm. NS5 methylates viral RNA cap at guanine N-7 and ribose 2'-O positions. Besides its role in RNA genome replication, also prevents the establishment of cellular antiviral state by blocking the interferon-alpha/beta (IFN-alpha/beta) signaling pathway. IFN-I induces binding of NS5 to host IFN-activated transcription factor STAT2, preventing its transcriptional activity. Host TRIM23 is the E3 ligase that interacts with and polyubiquitinates NS5 to promote its binding to STAT2 and trigger IFN-I signaling inhibition. The sequence is that of Genome polyprotein from Yellow fever virus (isolate Ivory Coast/85-82H/1982) (YFV).